A 329-amino-acid polypeptide reads, in one-letter code: GTP 3',8-cyclase (329 aa).

A Radical SAM core domain is found at alanine 8–alanine 234. Arginine 17 lines the GTP pocket. [4Fe-4S] cluster is bound by residues cysteine 24 and cysteine 28. Residue tyrosine 30 coordinates S-adenosyl-L-methionine. Residue cysteine 31 coordinates [4Fe-4S] cluster. A GTP-binding site is contributed by arginine 68. Residue glycine 72 coordinates S-adenosyl-L-methionine. Threonine 99 provides a ligand contact to GTP. Serine 123 provides a ligand contact to S-adenosyl-L-methionine. Lysine 160 lines the GTP pocket. Methionine 194 is a binding site for S-adenosyl-L-methionine. [4Fe-4S] cluster-binding residues include cysteine 257 and cysteine 260. Arginine 262 to arginine 264 is a GTP binding site. Cysteine 274 serves as a coordination point for [4Fe-4S] cluster.

The protein belongs to the radical SAM superfamily. MoaA family. Monomer and homodimer. [4Fe-4S] cluster serves as cofactor.

The catalysed reaction is GTP + AH2 + S-adenosyl-L-methionine = (8S)-3',8-cyclo-7,8-dihydroguanosine 5'-triphosphate + 5'-deoxyadenosine + L-methionine + A + H(+). The protein operates within cofactor biosynthesis; molybdopterin biosynthesis. In terms of biological role, catalyzes the cyclization of GTP to (8S)-3',8-cyclo-7,8-dihydroguanosine 5'-triphosphate. The protein is GTP 3',8-cyclase of Salmonella heidelberg (strain SL476).